The following is a 405-amino-acid chain: Acetylornithine aminotransferase 1 (405 aa).

Pyridoxal 5'-phosphate is bound by residues 108–109 and F141; that span reads GA. N(2)-acetyl-L-ornithine is bound at residue R144. Position 226–229 (226–229) interacts with pyridoxal 5'-phosphate; it reads DEVQ. At K255 the chain carries N6-(pyridoxal phosphate)lysine. T283 is a N(2)-acetyl-L-ornithine binding site. Pyridoxal 5'-phosphate is bound at residue T284.

Belongs to the class-III pyridoxal-phosphate-dependent aminotransferase family. ArgD subfamily. In terms of assembly, homodimer. Requires pyridoxal 5'-phosphate as cofactor.

Its subcellular location is the cytoplasm. It catalyses the reaction N(2)-acetyl-L-ornithine + 2-oxoglutarate = N-acetyl-L-glutamate 5-semialdehyde + L-glutamate. The protein operates within amino-acid biosynthesis; L-arginine biosynthesis; N(2)-acetyl-L-ornithine from L-glutamate: step 4/4. In Pseudomonas syringae pv. tomato (strain ATCC BAA-871 / DC3000), this protein is Acetylornithine aminotransferase 1.